Reading from the N-terminus, the 428-residue chain is Putative zinc finger protein 355P (428 aa).

One can recognise a KRAB domain in the interval 1–64 (MRDEVAEKEK…KHPGLTQHNI (64 aa)). 3 C2H2-type zinc fingers span residues 72-94 (YKCK…QRIH), 100-122 (YKCE…MRAH), and 128-150 (YKCE…KRIH). The C2H2-type 4; degenerate zinc finger occupies 156–178 (YKFEECDKAFYWVLSFTKHMIIH). Residues 184 to 206 (YKYQECGKAFKWSSNLTIHKRIH) form a C2H2-type 5; degenerate zinc finger. The C2H2-type 6; degenerate zinc-finger motif lies at 212 to 234 (CKCEECGKACKQSLGLTIQKRIH). The C2H2-type 7; degenerate zinc-finger motif lies at 263–285 (YNCEKCGKAFYCSSNLIQNNIVH). 2 C2H2-type zinc fingers span residues 291-313 (YKCQ…KIIH) and 335-357 (YKCE…MIVH). The C2H2-type 10; degenerate zinc finger occupies 363 to 385 (YKCEECGKAFKWSSELTIHQRIR). A C2H2-type 11 zinc finger spans residues 391 to 413 (YKCEECVRVFKHSSKLNEHKRNH).

The protein belongs to the krueppel C2H2-type zinc-finger protein family.

The protein localises to the nucleus. In terms of biological role, may be involved in transcriptional regulation. This Homo sapiens (Human) protein is Putative zinc finger protein 355P (ZNF355P).